We begin with the raw amino-acid sequence, 1359 residues long: Junctional cadherin 5-associated protein (1359 aa).

Disordered regions lie at residues 1–147 (MYSV…SLPV), 249–411 (PLNE…PAHP), 454–554 (NSSP…TCET), 591–813 (SHLP…CNSK), 840–1076 (KELQ…TIEI), 1105–1141 (RAGQNQPAEPDASACTPESPQEELLSRPAPADVPRVS), 1157–1207 (PLFV…KDVE), 1225–1260 (SVAGSEKRLRSPSKVIESLQEKLASPPRRADPDRLM), and 1276–1359 (FRNA…VERV). A compositionally biased stretch (basic and acidic residues) spans 15–28 (LSRDPPASREDNPK). Polar residues-rich tracts occupy residues 82–91 (PQSTSASRTS) and 98–112 (QPPSAWSSHPPTGND). The span at 120 to 135 (RQEARSQKPREHENLE) shows a compositional bias: basic and acidic residues. Residues 302 to 321 (QQSRGGADSSDSQDSQQMDA) are compositionally biased toward low complexity. A compositionally biased stretch (pro residues) spans 335 to 353 (LEPPVYVPPPSYRSPPQNI). Residues 539 to 554 (RQVSSPYSQGESTCET) are compositionally biased toward polar residues. Residues 591–613 (SHLPDRDMDNNDLKPSADQKNGS) show a composition bias toward basic and acidic residues. Polar residues-rich tracts occupy residues 619 to 632 (LQEQSLLSMSSTDL), 689 to 704 (QQTQTSFSEEPQSSQL), and 756 to 773 (LSPSSNSAFSRTSLSVDQ). Over residues 849 to 859 (SSSSSSSSSSS) the composition is skewed to low complexity. Over residues 868 to 880 (QENRAHCRQEDVG) the composition is skewed to basic and acidic residues. Residues 1003-1013 (PKITSAFSSVK) are compositionally biased toward polar residues. Residues Ser-1044 and Ser-1050 each carry the phosphoserine modification. Ser-1194 carries the post-translational modification Phosphoserine. A Phosphoserine modification is found at Ser-1281. The segment covering 1324–1342 (SISREEKEHPAAQKEKSMD) has biased composition (basic and acidic residues).

Its subcellular location is the cell junction. The protein localises to the adherens junction. This Homo sapiens (Human) protein is Junctional cadherin 5-associated protein.